We begin with the raw amino-acid sequence, 505 residues long: Peroxisome proliferator-activated receptor gamma (505 aa).

Residue Thr84 is glycosylated (O-linked (GlcNAc) threonine). Position 112 is a phosphoserine; by MAPK (Ser112). Residues 136–210 (AIECRVCGDK…VGMSHNAIRF (75 aa)) constitute a DNA-binding region (nuclear receptor). 2 NR C4-type zinc fingers span residues 139–159 (CRVC…CEGC) and 176–198 (CDLN…FQKC). An interaction with FAM120B region spans residues 205-280 (HNAIRFGRMP…DKSPFVIYDM (76 aa)). The NR LBD domain occupies 238-503 (DLRALAKHLY…HPLLQEIYKD (266 aa)). Residue Lys252 forms a Glycyl lysine isopeptide (Lys-Gly) (interchain with G-Cter in ubiquitin) linkage. The 9aaTAD signature appears at 495 to 503 (PLLQEIYKD).

This sequence belongs to the nuclear hormone receptor family. NR1 subfamily. In terms of assembly, interacts with FOXO1 (acetylated form). Heterodimer with other nuclear receptors, such as RXRA. The heterodimer with the retinoic acid receptor RXRA is called adipocyte-specific transcription factor ARF6. Interacts with NCOA6 coactivator, leading to a strong increase in transcription of target genes. Interacts with coactivator PPARBP, leading to a mild increase in transcription of target genes. Interacts with NOCA7 in a ligand-inducible manner. Interacts with NCOA1 and NCOA2 LXXLL motifs. Interacts with ASXL1, ASXL2, DNTTIP2, FAM120B, MAP2K1/MEK1, NR0B2, PDPK1, PRDM16, PRMT2 and TGFB1I1. Interacts (when activated by agonist) with PPP5C. Interacts with HELZ2 and THRAP3; the interaction stimulates the transcriptional activity of PPARG. Interacts with PER2, the interaction is ligand dependent and blocks PPARG recruitment to target promoters. Interacts with NOCT. Interacts with ACTN4. Interacts (when in the liganded conformation) with GPS2. Interacts with CRY1 and CRY2 in a ligand-dependent manner. In the absence of hormonal ligand, interacts with TACC1. In macrophages, interacts with PAQR3 and STUB1; the interactions promote PPARG poylubiquitination and STUB1-mediated degradation. Phosphorylated by MAPK. The phosphorylation inhibits PPAR gamma activity. Post-translationally, O-GlcNAcylation at Thr-84 reduces transcriptional activity in adipocytes. In terms of processing, phosphorylated at basal conditions and dephosphorylated when treated with the ligand. May be dephosphorylated by PPP5C. The phosphorylated form may be inactive and dephosphorylation at induces adipogenic activity. Ubiquitinated by E3 ubiquitin-protein ligase complex containing FBXO9; leading to proteasomal degradation. Ubiquitinated at Lys-252 by TRIM55 leading to proteasomal degradation. Ubiquitinated by E3 ubiquitin-protein ligase STUB1/CHIP; leading to proteasomal degradation. As to expression, highest expression in adipose tissue.

Its subcellular location is the nucleus. The protein localises to the cytoplasm. PDPK1 activates its transcriptional activity independently of its kinase activity. Nuclear receptor that binds peroxisome proliferators such as hypolipidemic drugs and fatty acids. Once activated by a ligand, the nuclear receptor binds to DNA specific PPAR response elements (PPRE) and modulates the transcription of its target genes, such as acyl-CoA oxidase. It therefore controls the peroxisomal beta-oxidation pathway of fatty acids. Key regulator of adipocyte differentiation and glucose homeostasis. ARF6 acts as a key regulator of the tissue-specific adipocyte P2 (aP2) enhancer. Acts as a critical regulator of gut homeostasis by suppressing NF-kappa-B-mediated pro-inflammatory responses. Plays a role in the regulation of cardiovascular circadian rhythms by regulating the transcription of BMAL1 in the blood vessels. In Rattus norvegicus (Rat), this protein is Peroxisome proliferator-activated receptor gamma (Pparg).